The sequence spans 283 residues: Pantothenate synthetase (283 aa).

Residue 30–37 (MGNLHAGH) participates in ATP binding. The active-site Proton donor is the His-37. A (R)-pantoate-binding site is contributed by Gln-61. Gln-61 is a beta-alanine binding site. 149–152 (GEKD) is an ATP binding site. Gln-155 lines the (R)-pantoate pocket. ATP contacts are provided by residues Val-178 and 186–189 (LSSR).

It belongs to the pantothenate synthetase family. In terms of assembly, homodimer.

The protein resides in the cytoplasm. It catalyses the reaction (R)-pantoate + beta-alanine + ATP = (R)-pantothenate + AMP + diphosphate + H(+). Its pathway is cofactor biosynthesis; (R)-pantothenate biosynthesis; (R)-pantothenate from (R)-pantoate and beta-alanine: step 1/1. Catalyzes the condensation of pantoate with beta-alanine in an ATP-dependent reaction via a pantoyl-adenylate intermediate. The protein is Pantothenate synthetase of Azotobacter vinelandii (strain DJ / ATCC BAA-1303).